Reading from the N-terminus, the 950-residue chain is Translation initiation factor IF-2 (950 aa).

2 disordered regions span residues 57-254 and 304-328; these read LAER…AVVI and DVSR…KSLS. Composition is skewed to low complexity over residues 101 to 131 and 139 to 169; these read AEPQ…EPAA and AAPL…QPAA. A compositionally biased stretch (pro residues) spans 170–215; the sequence is PAAPPAPTAQPSAPPPAAAQPRPPQPSAPSRPPPPGYRPAPPPGAR. Over residues 216-233 the composition is skewed to low complexity; the sequence is PPVSAAPGAPGQPGAAGQ. Residues 449 to 618 form the tr-type G domain; it reads IRPPVVTVMG…ALQSEVLELK (170 aa). The interval 458-465 is G1; sequence GHVDHGKT. Position 458–465 (458–465) interacts with GTP; that stretch reads GHVDHGKT. Residues 483-487 form a G2 region; it reads GITQH. Residues 504–507 are G3; the sequence is DTPG. Residues 504–508 and 558–561 each bind GTP; these read DTPGH and NKVD. The tract at residues 558-561 is G4; that stretch reads NKVD. Residues 594–596 are G5; sequence SAR.

Belongs to the TRAFAC class translation factor GTPase superfamily. Classic translation factor GTPase family. IF-2 subfamily.

The protein resides in the cytoplasm. Its function is as follows. One of the essential components for the initiation of protein synthesis. Protects formylmethionyl-tRNA from spontaneous hydrolysis and promotes its binding to the 30S ribosomal subunits. Also involved in the hydrolysis of GTP during the formation of the 70S ribosomal complex. The polypeptide is Translation initiation factor IF-2 (Anaeromyxobacter dehalogenans (strain 2CP-C)).